Consider the following 184-residue polypeptide: Casparian strip membrane protein 1 (184 aa).

The Cytoplasmic portion of the chain corresponds to 1–24 (MKESGEHGETSKAPLNRGVSKGLS). Residues 25-45 (VLDLILRFIAIIGTLASAIAM) traverse the membrane as a helical segment. Topologically, residues 46 to 72 (GTTNETLPFFTQFIRFKAQYSDLPTLT) are extracellular. An N-linked (GlcNAc...) asparagine glycan is attached at asparagine 49. The helical transmembrane segment at 73–93 (FFVVANSIVCAYLILSLPLSI) threads the bilayer. At 94 to 105 (VHIIRSRAKFSR) the chain is on the cytoplasmic side. Residues 106–126 (LLLIFLDAVMLALVTAGASAA) traverse the membrane as a helical segment. At 127–159 (AAIVYLAHKGNVRANWLAICQQFDSFCERISGS) the chain is on the extracellular side. The helical transmembrane segment at 160–180 (LIGSFGAMVVLILLILLSAIA) threads the bilayer. At 181–184 (LARR) the chain is on the cytoplasmic side.

This sequence belongs to the Casparian strip membrane proteins (CASP) family. As to quaternary structure, homodimer and heterodimers.

The protein resides in the cell membrane. Functionally, regulates membrane-cell wall junctions and localized cell wall deposition. Required for establishment of the Casparian strip membrane domain (CSD) and the subsequent formation of Casparian strips, a cell wall modification of the root endodermis that determines an apoplastic barrier between the intraorganismal apoplasm and the extraorganismal apoplasm and prevents lateral diffusion. This Panicum virgatum (Blackwell switchgrass) protein is Casparian strip membrane protein 1.